The following is a 389-amino-acid chain: Leucine aminopeptidase 1 (389 aa).

Positions 1-18 (MKSAALLLPLYTAAFAAA) are cleaved as a signal peptide. Positions 19–89 (AFHHEHAQAV…TLNHRINAES (71 aa)) are excised as a propeptide. 3 N-linked (GlcNAc...) asparagine glycosylation sites follow: asparagine 99, asparagine 146, and asparagine 156. Residues histidine 188, aspartate 207, glutamate 246, and aspartate 273 each coordinate Zn(2+). A disulfide bridge links cysteine 322 with cysteine 326. Histidine 355 provides a ligand contact to Zn(2+).

Belongs to the peptidase M28 family. M28E subfamily. In terms of assembly, monomer. Zn(2+) is required as a cofactor.

The protein localises to the secreted. Functionally, extracellular aminopeptidase that allows assimilation of proteinaceous substrates. The sequence is that of Leucine aminopeptidase 1 (lap1) from Pyrenophora tritici-repentis (strain Pt-1C-BFP) (Wheat tan spot fungus).